Here is a 125-residue protein sequence, read N- to C-terminus: Small ribosomal subunit protein uS13 (125 aa).

The tract at residues 90–125 is disordered; that stretch reads TRHRRGLPVRGQRTHTNARTKKGPRRAIAGKKKVTK.

The protein belongs to the universal ribosomal protein uS13 family. Part of the 30S ribosomal subunit. Forms a loose heterodimer with protein S19. Forms two bridges to the 50S subunit in the 70S ribosome.

Located at the top of the head of the 30S subunit, it contacts several helices of the 16S rRNA. In the 70S ribosome it contacts the 23S rRNA (bridge B1a) and protein L5 of the 50S subunit (bridge B1b), connecting the 2 subunits; these bridges are implicated in subunit movement. Contacts the tRNAs in the A and P-sites. The protein is Small ribosomal subunit protein uS13 of Gemmatimonas aurantiaca (strain DSM 14586 / JCM 11422 / NBRC 100505 / T-27).